The sequence spans 418 residues: Serine--tRNA ligase (418 aa).

L-serine is bound at residue 231–233 (TAE). 262–264 (RRE) lines the ATP pocket. Glutamate 285 serves as a coordination point for L-serine. 349 to 352 (EISS) is a binding site for ATP. An L-serine-binding site is contributed by serine 384.

Belongs to the class-II aminoacyl-tRNA synthetase family. Type-1 seryl-tRNA synthetase subfamily. In terms of assembly, homodimer. The tRNA molecule binds across the dimer.

It is found in the cytoplasm. The enzyme catalyses tRNA(Ser) + L-serine + ATP = L-seryl-tRNA(Ser) + AMP + diphosphate + H(+). The catalysed reaction is tRNA(Sec) + L-serine + ATP = L-seryl-tRNA(Sec) + AMP + diphosphate + H(+). Its pathway is aminoacyl-tRNA biosynthesis; selenocysteinyl-tRNA(Sec) biosynthesis; L-seryl-tRNA(Sec) from L-serine and tRNA(Sec): step 1/1. Catalyzes the attachment of serine to tRNA(Ser). Is also able to aminoacylate tRNA(Sec) with serine, to form the misacylated tRNA L-seryl-tRNA(Sec), which will be further converted into selenocysteinyl-tRNA(Sec). This Coprothermobacter proteolyticus (strain ATCC 35245 / DSM 5265 / OCM 4 / BT) protein is Serine--tRNA ligase.